We begin with the raw amino-acid sequence, 84 residues long: Small ribosomal subunit protein uS17c (84 aa).

The protein belongs to the universal ribosomal protein uS17 family. As to quaternary structure, part of the 30S ribosomal subunit.

The protein localises to the plastid. The protein resides in the chloroplast. Functionally, one of the primary rRNA binding proteins, it binds specifically to the 5'-end of 16S ribosomal RNA. This chain is Small ribosomal subunit protein uS17c (rps17), found in Phaeodactylum tricornutum (strain CCAP 1055/1).